A 606-amino-acid polypeptide reads, in one-letter code: Glucose methanol choline oxidoreductase atC (606 aa).

An N-terminal signal peptide occupies residues 1 to 19; it reads MRVFPTYIAVSGLFGGAFA. Residues asparagine 43, asparagine 69, asparagine 87, asparagine 290, asparagine 368, asparagine 418, asparagine 421, and asparagine 552 are each glycosylated (N-linked (GlcNAc...) asparagine).

Belongs to the GMC oxidoreductase family.

The enzyme catalyses terremutin + A = terreate + AH2. Its pathway is secondary metabolite biosynthesis. Its function is as follows. Glucose methanol choline oxidoreductase; part of the gene cluster that mediates the biosynthesis of terreic acid, a quinone epoxide inhibitor of Bruton's tyrosine kinase. The first step of the pathway is the synthesis of 6-methylsalicylic acid (6-MSA) by the 6-methylsalicylic acid synthase atX. In the biosynthesis of 6-MSA, atX utilizes one acetyl-CoA and three malonyl-CoAs as its substrates and catalyzes a series of programmed reactions including Claisen condensation, reduction, aldol cyclization, and the hydrolytic cleavage that yields 6-MSA. The 6-methylsalicylate 1-monooxygenase atA then catalyzes the decarboxylative hydroxylation of 6-MSA to 3-methylcatechol. The next step is the conversion of 3-methylcatechol to 3-methyl-1,2,4-benzenetriol by cytochrome P450 monooxygenase atE, which is enhanced by cytochrome P450 monooxygenase atG. Then, the epoxidase atD catalyzes the epoxidation and hydroxyl oxidation of 3-methyl-1,2,4-benzenetriol to terremutin. Lastly, GMC oxidoreductase atC oxidizes terremutin to terreic acid. The polypeptide is Glucose methanol choline oxidoreductase atC (Aspergillus terreus (strain NIH 2624 / FGSC A1156)).